An 875-amino-acid chain; its full sequence is MTLARFVLALMLGALPEVVGFDSVLNDSLHHSHRHSPPPGPHYPYYLPTQQRPPRTRPPPPLPRFPRPPRALPAQRPHALQAGHTPRPHPWGCPAGEPWVSVTDFGAPCLRWAEVPPFLERSPPASWAQLRGQRHNFCRSPDGAGRPWCFYGDARGKVDWGYCDCRHGSVRLRGGKNEFEGTVEVYASGVWGTVCSSHWDDSDASVICHQLQLGGKGIAKQTPFSGLGLIPIYWSNVRCRGDEENILLCEKDIWQGGVCPQKMAAAVTCSFSHGPTFPIIRLAGGSSVHEGRVELYHAGQWGTVCDDQWDDADAEVICRQLGLSGIAKAWHQAYFGEGSGPVMLDEVRCTGNELSIEQCPKSSWGEHNCGHKEDAGVSCTPLTDGVIRLAGGKGSHEGRLEVYYRGQWGTVCDDGWTELNTYVVCRQLGFKYGKQASANHFEESTGPIWLDDVSCSGKETRFLQCSRRQWGRHDCSHREDVSIACYPGGEGHRLSLGFPVRLVDGENKKEGRVEVFINGQWGTICDDGWTDKDAAVICRQLGYKGPARARTMAYFGEGKGPIHVDNVKCTGNERSLADCIKQDIGRHNCRHSEDAGVICDYFGKKASGNSNKESLSSVCGLRLLHRRQKRIIGGKNSLRGGWPWQVSLRLKSSHGDGRLLCGATLLSSCWVLTAAHCFKRYGNSTRSYAVRVGDYHTLVPEEFEEEIGVQQIVIHREYRPDRSDYDIALVRLQGPEEQCARFSSHVLPACLPLWRERPQKTASNCYITGWGDTGRAYSRTLQQAAIPLLPKRFCEERYKRRFTGRMLCAGNLHEHKRVDSCQGDSGGPLMCERPGESWVVYGVTSWGYGCGVKDSPGVYTKVSAFVPWIKSVTKL.

A signal peptide spans 1 to 20 (MTLARFVLALMLGALPEVVG). The N-linked (GlcNAc...) asparagine glycan is linked to Asn-26. The disordered stretch occupies residues 29 to 88 (LHHSHRHSPPPGPHYPYYLPTQQRPPRTRPPPPLPRFPRPPRALPAQRPHALQAGHTPRP). A compositionally biased stretch (low complexity) spans 43 to 53 (YPYYLPTQQRP). Pro residues predominate over residues 56 to 71 (TRPPPPLPRFPRPPRA). In terms of domain architecture, Kringle spans 93–165 (CPAGEPWVSV…GKVDWGYCDC (73 aa)). Disulfide bonds link Cys-93–Cys-165, Cys-109–Cys-149, Cys-138–Cys-163, Cys-195–Cys-259, Cys-208–Cys-269, Cys-239–Cys-249, Cys-305–Cys-369, Cys-318–Cys-379, Cys-349–Cys-359, Cys-412–Cys-475, Cys-425–Cys-485, Cys-455–Cys-465, Cys-525–Cys-589, Cys-538–Cys-599, Cys-569–Cys-579, Cys-619–Cys-750, Cys-661–Cys-677, Cys-765–Cys-831, Cys-794–Cys-808, and Cys-821–Cys-850. SRCR domains follow at residues 170–271 (VRLR…TCSF), 280–381 (IRLA…SCTP), 387–487 (IRLA…ACYP), and 500–601 (VRLV…ICDY). Positions 619–630 (CGLRLLHRRQKR) are zymogen activation region. The Peptidase S1 domain maps to 631-874 (IIGGKNSLRG…FVPWIKSVTK (244 aa)). His-676 acts as the Charge relay system in catalysis. A glycan (N-linked (GlcNAc...) asparagine) is linked at Asn-683. The active-site Charge relay system is Asp-726. Ser-825 acts as the Charge relay system in catalysis.

This sequence belongs to the peptidase S1 family.

It is found in the secreted. Its function is as follows. Plays a role in neuronal plasticity and the proteolytic action may subserve structural reorganizations associated with learning and memory operations. The polypeptide is Neurotrypsin (PRSS12) (Pan troglodytes (Chimpanzee)).